The sequence spans 657 residues: Acetyl-coenzyme A synthetase (657 aa).

CoA is bound by residues 192–195 (RRGK) and Thr-311. Residues 387–389 (GEP), 411–416 (DTWWQT), Asp-504, Arg-519, and Arg-530 contribute to the ATP site. Mg(2+)-binding residues include His-543 and Val-546. Residue Arg-592 participates in CoA binding. Position 617 is an N6-acetyllysine (Lys-617).

The protein belongs to the ATP-dependent AMP-binding enzyme family. Requires Mg(2+) as cofactor. In terms of processing, acetylated. Deacetylation by the SIR2-homolog deacetylase activates the enzyme.

The catalysed reaction is acetate + ATP + CoA = acetyl-CoA + AMP + diphosphate. Catalyzes the conversion of acetate into acetyl-CoA (AcCoA), an essential intermediate at the junction of anabolic and catabolic pathways. AcsA undergoes a two-step reaction. In the first half reaction, AcsA combines acetate with ATP to form acetyl-adenylate (AcAMP) intermediate. In the second half reaction, it can then transfer the acetyl group from AcAMP to the sulfhydryl group of CoA, forming the product AcCoA. The protein is Acetyl-coenzyme A synthetase of Campylobacter jejuni subsp. jejuni serotype O:6 (strain 81116 / NCTC 11828).